Consider the following 968-residue polypeptide: Isoleucine--tRNA ligase (968 aa).

Residues P68 to H78 carry the 'HIGH' region motif. E582 contacts L-isoleucyl-5'-AMP. The 'KMSKS' region motif lies at K623–S627. K626 serves as a coordination point for ATP. 4 residues coordinate Zn(2+): C936, C939, C956, and C959.

This sequence belongs to the class-I aminoacyl-tRNA synthetase family. IleS type 1 subfamily. Monomer. Requires Zn(2+) as cofactor.

It is found in the cytoplasm. It catalyses the reaction tRNA(Ile) + L-isoleucine + ATP = L-isoleucyl-tRNA(Ile) + AMP + diphosphate. Its function is as follows. Catalyzes the attachment of isoleucine to tRNA(Ile). As IleRS can inadvertently accommodate and process structurally similar amino acids such as valine, to avoid such errors it has two additional distinct tRNA(Ile)-dependent editing activities. One activity is designated as 'pretransfer' editing and involves the hydrolysis of activated Val-AMP. The other activity is designated 'posttransfer' editing and involves deacylation of mischarged Val-tRNA(Ile). The protein is Isoleucine--tRNA ligase of Prochlorococcus marinus (strain AS9601).